A 211-amino-acid polypeptide reads, in one-letter code: Thiamine-phosphate synthase (211 aa).

4-amino-2-methyl-5-(diphosphooxymethyl)pyrimidine contacts are provided by residues 37-41 (QLRIK) and N69. Residues D70 and D89 each contribute to the Mg(2+) site. S108 provides a ligand contact to 4-amino-2-methyl-5-(diphosphooxymethyl)pyrimidine. 134–136 (TQT) serves as a coordination point for 2-[(2R,5Z)-2-carboxy-4-methylthiazol-5(2H)-ylidene]ethyl phosphate. K137 provides a ligand contact to 4-amino-2-methyl-5-(diphosphooxymethyl)pyrimidine. 2-[(2R,5Z)-2-carboxy-4-methylthiazol-5(2H)-ylidene]ethyl phosphate contacts are provided by residues G166 and 186–187 (VS).

Belongs to the thiamine-phosphate synthase family. It depends on Mg(2+) as a cofactor.

The catalysed reaction is 2-[(2R,5Z)-2-carboxy-4-methylthiazol-5(2H)-ylidene]ethyl phosphate + 4-amino-2-methyl-5-(diphosphooxymethyl)pyrimidine + 2 H(+) = thiamine phosphate + CO2 + diphosphate. It carries out the reaction 2-(2-carboxy-4-methylthiazol-5-yl)ethyl phosphate + 4-amino-2-methyl-5-(diphosphooxymethyl)pyrimidine + 2 H(+) = thiamine phosphate + CO2 + diphosphate. The enzyme catalyses 4-methyl-5-(2-phosphooxyethyl)-thiazole + 4-amino-2-methyl-5-(diphosphooxymethyl)pyrimidine + H(+) = thiamine phosphate + diphosphate. It participates in cofactor biosynthesis; thiamine diphosphate biosynthesis; thiamine phosphate from 4-amino-2-methyl-5-diphosphomethylpyrimidine and 4-methyl-5-(2-phosphoethyl)-thiazole: step 1/1. Functionally, condenses 4-methyl-5-(beta-hydroxyethyl)thiazole monophosphate (THZ-P) and 2-methyl-4-amino-5-hydroxymethyl pyrimidine pyrophosphate (HMP-PP) to form thiamine monophosphate (TMP). The sequence is that of Thiamine-phosphate synthase from Shigella sonnei (strain Ss046).